A 359-amino-acid chain; its full sequence is Fructose-bisphosphate aldolase (359 aa).

Serine 62 is a binding site for D-glyceraldehyde 3-phosphate. Catalysis depends on aspartate 109, which acts as the Proton donor. The Zn(2+) site is built by histidine 110, aspartate 144, glutamate 174, and histidine 226. Glycine 227 is a dihydroxyacetone phosphate binding site. Zn(2+) is bound at residue histidine 265. Residues glycine 266–serine 268 and asparagine 287–threonine 290 contribute to the dihydroxyacetone phosphate site.

This sequence belongs to the class II fructose-bisphosphate aldolase family. Homodimer. Zn(2+) serves as cofactor.

It localises to the cytoplasm. It catalyses the reaction beta-D-fructose 1,6-bisphosphate = D-glyceraldehyde 3-phosphate + dihydroxyacetone phosphate. The protein operates within carbohydrate degradation; glycolysis; D-glyceraldehyde 3-phosphate and glycerone phosphate from D-glucose: step 4/4. Its function is as follows. Catalyzes the aldol condensation of dihydroxyacetone phosphate (DHAP or glycerone-phosphate) with glyceraldehyde 3-phosphate (G3P) to form fructose 1,6-bisphosphate (FBP) in gluconeogenesis and the reverse reaction in glycolysis. In Candida albicans (strain SC5314 / ATCC MYA-2876) (Yeast), this protein is Fructose-bisphosphate aldolase (FBA1).